The primary structure comprises 482 residues: Cobyrinate a,c-diamide synthase (482 aa).

In terms of domain architecture, GATase cobBQ-type spans 248-441 (RLAIAQDQAF…LHLHWGSQIS (194 aa)). The Nucleophile role is filled by C331.

Belongs to the CobB/CbiA family. Mg(2+) is required as a cofactor.

It catalyses the reaction cob(II)yrinate + 2 L-glutamine + 2 ATP + 2 H2O = cob(II)yrinate a,c diamide + 2 L-glutamate + 2 ADP + 2 phosphate + 2 H(+). It functions in the pathway cofactor biosynthesis; adenosylcobalamin biosynthesis; cob(II)yrinate a,c-diamide from sirohydrochlorin (anaerobic route): step 10/10. Its function is as follows. Catalyzes the ATP-dependent amidation of the two carboxylate groups at positions a and c of cobyrinate, using either L-glutamine or ammonia as the nitrogen source. In Synechocystis sp. (strain ATCC 27184 / PCC 6803 / Kazusa), this protein is Cobyrinate a,c-diamide synthase.